The chain runs to 391 residues: Putative neutrophil cytosol factor 1B (391 aa).

A PX domain is found at 1–126 (MGDTFIRHIA…DFFKVRPDDL (126 aa)). SH3 domains follow at residues 157-216 (IILQ…PLDS) and 227-286 (YAGE…KSGQ). Positions 286 to 391 (QDVSQAQRQI…STKRKLASAV (106 aa)) are disordered. Residues Ser-304 and Ser-305 each carry the phosphoserine modification. The segment covering 310–319 (HSIHQRSRKR) has biased composition (basic residues). A phosphoserine mark is found at Ser-321, Ser-329, Ser-346, and Ser-349.

Its subcellular location is the cytoplasm. May be required for activation of the latent NADPH oxidase (necessary for superoxide production). This Homo sapiens (Human) protein is Putative neutrophil cytosol factor 1B (NCF1B).